The chain runs to 399 residues: Glutathione S-transferase LANCL1 (399 aa).

N-acetylalanine is present on A2. Residue K142 is modified to N6-acetyllysine. C276 is a Zn(2+) binding site. K317 contributes to the glutathione binding site. Zn(2+) is bound by residues C322 and H323. 364–367 (RTPD) contributes to the glutathione binding site.

This sequence belongs to the LanC-like protein family. As to quaternary structure, interacts with the C-terminal of STOM. Interacts with the EPS8 SH3 domain. Interaction with EPS8 is inhibited by glutathione binding. As to expression, strongly expressed in the brain, testis and skeletal muscle. Expressed in the neurons of the cerebellum, the germinal cells of the seminiferous tubules in testis, in liver hepoatocytes and in cardiac myocytes.

The protein localises to the cytoplasm. The protein resides in the cell membrane. The enzyme catalyses RX + glutathione = an S-substituted glutathione + a halide anion + H(+). The catalysed reaction is 1-chloro-2,4-dinitrobenzene + glutathione = 2,4-dinitrophenyl-S-glutathione + chloride + H(+). Functionally, functions as a glutathione transferase. Catalyzes conjugation of the glutathione (GSH) to artificial substrates 1-chloro-2,4-dinitrobenzene (CDNB) and p-nitrophenyl acetate. Mitigates neuronal oxidative stress during normal postnatal development and in response to oxidative stresses probably through GSH antioxidant defense mechanism. May play a role in EPS8 signaling. Binds glutathione. The protein is Glutathione S-transferase LANCL1 of Rattus norvegicus (Rat).